A 359-amino-acid chain; its full sequence is 4-hydroxy-3-methylbut-2-en-1-yl diphosphate synthase (flavodoxin) (359 aa).

Residues cysteine 264, cysteine 267, cysteine 299, and glutamate 306 each contribute to the [4Fe-4S] cluster site.

Belongs to the IspG family. Requires [4Fe-4S] cluster as cofactor.

The catalysed reaction is (2E)-4-hydroxy-3-methylbut-2-enyl diphosphate + oxidized [flavodoxin] + H2O + 2 H(+) = 2-C-methyl-D-erythritol 2,4-cyclic diphosphate + reduced [flavodoxin]. It functions in the pathway isoprenoid biosynthesis; isopentenyl diphosphate biosynthesis via DXP pathway; isopentenyl diphosphate from 1-deoxy-D-xylulose 5-phosphate: step 5/6. In terms of biological role, converts 2C-methyl-D-erythritol 2,4-cyclodiphosphate (ME-2,4cPP) into 1-hydroxy-2-methyl-2-(E)-butenyl 4-diphosphate. The sequence is that of 4-hydroxy-3-methylbut-2-en-1-yl diphosphate synthase (flavodoxin) from Helicobacter pylori (strain J99 / ATCC 700824) (Campylobacter pylori J99).